Reading from the N-terminus, the 54-residue chain is Large ribosomal subunit protein bL33 (54 aa).

The protein belongs to the bacterial ribosomal protein bL33 family.

This is Large ribosomal subunit protein bL33 from Frankia alni (strain DSM 45986 / CECT 9034 / ACN14a).